The sequence spans 467 residues: Ribosome biogenesis protein YTM1 (467 aa).

The segment at 8–95 is ubiquitin-like (UBL) domain; sequence IKIKFFTNEE…ETFLSLEYTR (88 aa). The sufficient for interaction with ERB1 and association with 66S pre-ribosomes stretch occupies residues 105–467; that stretch reads SFNNEDWISS…QINKGSDISK (363 aa). 7 WD repeats span residues 120-159, 161-199, 216-255, 293-333, 335-374, 382-422, and 432-467; these read KTLPSVTLSNMMISQPKILSGSYDGIVRTYNMSGNVEKQY, GHSGPIRAVKWVSPTRIVSAGNDRQVRLWKTSADDGSIP, GHKAPVVALAVENTSNRILSAGYDHSIGFWSTNYKEMTTI, SHTQ…CIDT, STGYSLLSIVQLPKSKLLATGSSARHINLHDPRISNNTTE, GHTN…SLYT, and KGADKVFAVSWDNEIGIISGGQDKKIQINKGSDISK.

It belongs to the WD repeat WDR12/YTM1 family. Component of the NOP7 complex, composed of ERB1, NOP7 and YTM1. The complex is held together by ERB1, which interacts with NOP7 via its N-terminal domain and with YTM1 via a high-affinity interaction between the seven-bladed beta-propeller domains of the 2 proteins. The NOP7 complex associates with the 66S pre-ribosome. Interacts (via UBL domain) with MDN1 (via VWFA/MIDAS domain).

It localises to the nucleus. The protein localises to the nucleolus. Its subcellular location is the nucleoplasm. Component of the NOP7 complex, which is required for maturation of the 25S and 5.8S ribosomal RNAs and formation of the 60S ribosome. In Scheffersomyces stipitis (strain ATCC 58785 / CBS 6054 / NBRC 10063 / NRRL Y-11545) (Yeast), this protein is Ribosome biogenesis protein YTM1.